Consider the following 394-residue polypeptide: L-lactate dehydrogenase (394 aa).

An FMN hydroxy acid dehydrogenase domain is found at 1 to 380 (MIISAASDYR…SRDSLVQNAE (380 aa)). Y24 lines the substrate pocket. FMN contacts are provided by S106 and Q127. Y129 serves as a coordination point for substrate. Residue T155 coordinates FMN. Position 164 (R164) interacts with substrate. An FMN-binding site is contributed by K251. Catalysis depends on H275, which acts as the Proton acceptor. A substrate-binding site is contributed by R278. Position 306–330 (306–330 (DSGIRNGLDVVRMIALGADSVLLGR)) interacts with FMN.

Belongs to the FMN-dependent alpha-hydroxy acid dehydrogenase family. Requires FMN as cofactor.

The protein resides in the cell inner membrane. It catalyses the reaction (S)-lactate + A = pyruvate + AH2. Catalyzes the conversion of L-lactate to pyruvate. Is coupled to the respiratory chain. In Klebsiella pneumoniae subsp. pneumoniae (strain ATCC 700721 / MGH 78578), this protein is L-lactate dehydrogenase.